A 496-amino-acid chain; its full sequence is MPSISTDFDVRPYEDVPAQTIALSVPDAAAPKHCPIQLLFWPVDGKSSFTRGYENLKEGLSRLLSDVPVLAGKLERGWKGDSRYLAVNISSDASVEFVYEDVSAEDIIPSYDNLAQNGFPTTGFRDILSPKMSLGPMVEGSPMMCAKLNMIKGGAILAYGFSHVLADGWANSELGRLWALHAAQVSQGIEFKKHKDATPDEDIRRRLSTLPEYDTDVPLDAFLQITPSEEATNFLHKDVLSAEKAKKKAREKMMATLLAAGEVPELPRFTFWRFTPEKLKELKQAAAGSDPDKWISTMDALAGLFWSRIALIQGQSSNGHQQSRCIFALDIRRRLQPPVPLGYIGNVFSPVDALCPLDELESDSLGLKAAAQSMRQANKGWAQSRWEAWLNKIMSLPLDQTLDTSQEFRLQKHNMYFNDYSAFQLNTASWGAPFGQPTRTRCLRSGLSGGAAGVWVCPKLPDGSLEVWLTSTAALQKSLFEDTMFNHYAEFVCQHT.

The active-site Proton acceptor is His-163.

It belongs to the plant acyltransferase family. In terms of assembly, monomer.

It participates in secondary metabolite biosynthesis. In terms of biological role, acyltransferase; part of the gene cluster that mediates the biosynthesis of squalestatin S1 (SQS1, also known as zaragozic acid A), a heavily oxidized fungal polyketide that offers potent cholesterol lowering activity by targeting squalene synthase (SS). SQS1 is composed of a 2,8-dioxobicyclic[3.2.1]octane-3,4,5-tricarboxyclic acid core that is connected to two lipophilic polyketide arms. These initial steps feature the priming of an unusual benzoic acid starter unit onto the highly reducing polyketide synthase clz14, followed by oxaloacetate extension and product release to generate a tricarboxylic acid containing product. The phenylalanine ammonia lyase (PAL) clz10 and the acyl-CoA ligase clz12 are involved in transforming phenylalanine into benzoyl-CoA. The citrate synthase-like protein clz17 is involved in connecting the C-alpha-carbons of the hexaketide chain and oxaloacetate to afford the tricarboxylic acid unit. The potential hydrolytic enzymes, clz11 and clz13, are in close proximity to pks2 and may participate in product release. On the other side, the tetraketide arm is synthesized by a the squalestatin tetraketide synthase clz2 and enzymatically esterified to the core in the last biosynthetic step, by the acetyltransferase clz6. The biosynthesis of the tetraketide must involve 3 rounds of chain extension. After the first and second rounds methyl-transfer occurs, and in all rounds of extension the ketoreductase and dehydratase are active. The enoyl reductase and C-MeT of clz2 are not active in the final round of extension. The acetyltransferase clz6 appears to have a broad substrate selectivity for its acyl CoA substrate, allowing the in vitro synthesis of novel squalestatins. The biosynthesis of SQS1 requires several oxidative steps likely performed by oxidoreductases clz3, clz15 and clz16. Finally, in support of the identification of the cluster as being responsible for SQS1 production, the cluster contains a gene encoding a putative squalene synthase (SS) clz20, suggesting a likely mechanism for self-resistance. The protein is Acyltransferase clz6 of Cochliobolus lunatus (Filamentous fungus).